The following is a 403-amino-acid chain: Aloesone synthase (403 aa).

Cys-174 is an active-site residue. Residues Ser-281 and 318 to 321 (GGRA) contribute to the CoA site.

The protein belongs to the thiolase-like superfamily. Chalcone/stilbene synthases family. In terms of assembly, homodimer.

It participates in secondary metabolite biosynthesis; flavonoid biosynthesis. In terms of biological role, catalyzes the iterative condensations of 6, 7 or 8 molecules of malonyl-CoA to produce various aromatic polyketides. Produces the heptaketide aloesone, the aglycone of aloesin, from 7 molecules of malonyl-CoA as a major product. Also able to produce a hexaketide pyrone, a heptaketide 6-(2-acetyl-3,5-dihydroxybenzyl)-4-hydroxy-2-pyrone, a novel heptaketide 6-(2-(2,4-dihydroxy-6-methylphenyl)-2-oxoethyl)-4-hydroxy-2-pyrone and octaketides SEK4/SEK4b. This is Aloesone synthase (PKS3) from Aloe arborescens (Kidachi aloe).